Reading from the N-terminus, the 248-residue chain is Pulmonary surfactant-associated protein A (248 aa).

The signal sequence occupies residues 1 to 17 (MWLRCLALALTLLMVSG). Asn20 carries an N-linked (GlcNAc...) asparagine glycan. The 73-residue stretch at 28–100 (GNPGIPGTPG…PGERGPPGLP (73 aa)) folds into the Collagen-like domain. The interval 29–103 (NPGIPGTPGS…RGPPGLPASL (75 aa)) is disordered. 9 positions are modified to 4-hydroxyproline: Pro30, Pro33, Pro36, Pro42, Pro54, Pro57, Pro63, Pro67, and Pro70. Residues 42–51 (PGRDGRDGVK) are compositionally biased toward basic and acidic residues. Residues 54–65 (PGPPGPLGPPGG) are compositionally biased toward pro residues. The segment covering 84–93 (ERGEKGEPGE) has biased composition (basic and acidic residues). The region spanning 132–248 (LVVGRKVFSS…LQYRLAICEF (117 aa)) is the C-type lectin domain. Intrachain disulfides connect Cys155–Cys246 and Cys224–Cys238. Asn207 is a glycosylation site (N-linked (GlcNAc...) asparagine). Positions 215, 217, and 234 each coordinate Ca(2+).

The protein belongs to the SFTPA family. As to quaternary structure, oligomeric complex of 6 set of homotrimers.

It is found in the secreted. The protein resides in the extracellular space. Its subcellular location is the extracellular matrix. It localises to the surface film. Its function is as follows. In presence of calcium ions, it binds to surfactant phospholipids and contributes to lower the surface tension at the air-liquid interface in the alveoli of the mammalian lung and is essential for normal respiration. Enhances the expression of MYO18A/SP-R210 on alveolar macrophages. This is Pulmonary surfactant-associated protein A (SFTPA1) from Canis lupus familiaris (Dog).